A 167-amino-acid polypeptide reads, in one-letter code: Leptin (167 aa).

Positions M1 to A21 are cleaved as a signal peptide. Cysteines 117 and 167 form a disulfide.

This sequence belongs to the leptin family.

It is found in the secreted. Key player in the regulation of energy balance and body weight control. Once released into the circulation, has central and peripheral effects by binding LEPR, found in many tissues, which results in the activation of several major signaling pathways. In the hypothalamus, acts as an appetite-regulating factor that induces a decrease in food intake and an increase in energy consumption by inducing anorexinogenic factors and suppressing orexigenic neuropeptides, also regulates bone mass and secretion of hypothalamo-pituitary-adrenal hormones. In the periphery, increases basal metabolism, influences reproductive function, regulates pancreatic beta-cell function and insulin secretion, is pro-angiogenic for endothelial cell and affects innate and adaptive immunity. In the arcuate nucleus of the hypothalamus, activates by depolarization POMC neurons inducing FOS and SOCS3 expression to release anorexigenic peptides and inhibits by hyperpolarization NPY neurons inducing SOCS3 with a consequent reduction on release of orexigenic peptides. In addition to its known satiety inducing effect, has a modulatory role in nutrient absorption. In the intestine, reduces glucose absorption by enterocytes by activating PKC and leading to a sequential activation of p38, PI3K and ERK signaling pathways which exerts an inhibitory effect on glucose absorption. Acts as a growth factor on certain tissues, through the activation of different signaling pathways increases expression of genes involved in cell cycle regulation such as CCND1, via JAK2-STAT3 pathway, or VEGFA, via MAPK1/3 and PI3K-AKT1 pathways. May also play an apoptotic role via JAK2-STAT3 pathway and up-regulation of BIRC5 expression. Pro-angiogenic, has mitogenic activity on vascular endothelial cells and plays a role in matrix remodeling by regulating the expression of matrix metalloproteinases (MMPs) and tissue inhibitors of metalloproteinases (TIMPs). In innate immunity, modulates the activity and function of neutrophils by increasing chemotaxis and the secretion of oxygen radicals. Increases phagocytosis by macrophages and enhances secretion of pro-inflammatory mediators. Increases cytotoxic ability of NK cells. Plays a pro-inflammatory role, in synergy with IL1B, by inducing NOS2 which promotes the production of IL6, IL8 and Prostaglandin E2, through a signaling pathway that involves JAK2, PI3K, MAP2K1/MEK1 and MAPK14/p38. In adaptive immunity, promotes the switch of memory T-cells towards T helper-1 cell immune responses. Increases CD4(+)CD25(-) T-cell proliferation and reduces autophagy during TCR (T-cell receptor) stimulation, through MTOR signaling pathway activation and BCL2 up-regulation. The protein is Leptin (LEP) of Sminthopsis crassicaudata (Fat-tailed dunnart).